The chain runs to 399 residues: Cytohesin-3 (399 aa).

Positions 14–61 form a coiled coil; the sequence is EDLSLEEREELLDIRRRKKELIDDIERLKYEIAEVMTEIDNLTSVEES. An SEC7 domain is found at 77–206; the sequence is FNMDPKKGIQ…IIMLNTSLHN (130 aa). Residues 264–380 enclose the PH domain; the sequence is NPDREGWLLK…WMKSIKASIS (117 aa). Residues 273–280, Arg-284, Tyr-295, Arg-305, and Asn-354 contribute to the a 1,2-diacyl-sn-glycero-3-phospho-(1D-myo-inositol-3,4,5-trisphosphate) site; that span reads KLGGRVKT. Residues 391 to 399 are C-terminal autoinhibitory region; the sequence is RKRRIANKK.

In terms of assembly, interacts with TAMALIN. Interacts with FRMD4A. Interacts with FRMD4B.

The protein resides in the cytoplasm. Its subcellular location is the cytosol. It localises to the cell membrane. It is found in the cell junction. The protein localises to the adherens junction. The protein resides in the tight junction. In terms of biological role, promotes guanine-nucleotide exchange on ARF1. Promotes the activation of ARF factors through replacement of GDP with GTP. Plays a role in the epithelial polarization. This chain is Cytohesin-3 (Cyth3), found in Mus musculus (Mouse).